The sequence spans 95 residues: Aspartyl/glutamyl-tRNA(Asn/Gln) amidotransferase subunit C (95 aa).

This sequence belongs to the GatC family. In terms of assembly, heterotrimer of A, B and C subunits.

It carries out the reaction L-glutamyl-tRNA(Gln) + L-glutamine + ATP + H2O = L-glutaminyl-tRNA(Gln) + L-glutamate + ADP + phosphate + H(+). The catalysed reaction is L-aspartyl-tRNA(Asn) + L-glutamine + ATP + H2O = L-asparaginyl-tRNA(Asn) + L-glutamate + ADP + phosphate + 2 H(+). In terms of biological role, allows the formation of correctly charged Asn-tRNA(Asn) or Gln-tRNA(Gln) through the transamidation of misacylated Asp-tRNA(Asn) or Glu-tRNA(Gln) in organisms which lack either or both of asparaginyl-tRNA or glutaminyl-tRNA synthetases. The reaction takes place in the presence of glutamine and ATP through an activated phospho-Asp-tRNA(Asn) or phospho-Glu-tRNA(Gln). The polypeptide is Aspartyl/glutamyl-tRNA(Asn/Gln) amidotransferase subunit C (Methylocella silvestris (strain DSM 15510 / CIP 108128 / LMG 27833 / NCIMB 13906 / BL2)).